The following is a 94-amino-acid chain: Aspartyl/glutamyl-tRNA(Asn/Gln) amidotransferase subunit C (94 aa).

Belongs to the GatC family. As to quaternary structure, heterotrimer of A, B and C subunits.

It carries out the reaction L-glutamyl-tRNA(Gln) + L-glutamine + ATP + H2O = L-glutaminyl-tRNA(Gln) + L-glutamate + ADP + phosphate + H(+). It catalyses the reaction L-aspartyl-tRNA(Asn) + L-glutamine + ATP + H2O = L-asparaginyl-tRNA(Asn) + L-glutamate + ADP + phosphate + 2 H(+). Functionally, allows the formation of correctly charged Asn-tRNA(Asn) or Gln-tRNA(Gln) through the transamidation of misacylated Asp-tRNA(Asn) or Glu-tRNA(Gln) in organisms which lack either or both of asparaginyl-tRNA or glutaminyl-tRNA synthetases. The reaction takes place in the presence of glutamine and ATP through an activated phospho-Asp-tRNA(Asn) or phospho-Glu-tRNA(Gln). The chain is Aspartyl/glutamyl-tRNA(Asn/Gln) amidotransferase subunit C from Nitratidesulfovibrio vulgaris (strain ATCC 29579 / DSM 644 / CCUG 34227 / NCIMB 8303 / VKM B-1760 / Hildenborough) (Desulfovibrio vulgaris).